We begin with the raw amino-acid sequence, 141 residues long: Lutropin subunit beta (141 aa).

The signal sequence occupies residues 1–20 (MERLQGLLLWLLLSPSVVWA). 6 cysteine pairs are disulfide-bonded: Cys-29–Cys-77, Cys-43–Cys-92, Cys-46–Cys-130, Cys-54–Cys-108, Cys-58–Cys-110, and Cys-113–Cys-120. An N-linked (GlcNAc...) asparagine glycan is attached at Asn-33.

The protein belongs to the glycoprotein hormones subunit beta family. Heterodimer of a common alpha chain and a unique beta chain which confers biological specificity to thyrotropin, lutropin, follitropin and gonadotropin.

The protein resides in the secreted. In terms of biological role, promotes spermatogenesis and ovulation by stimulating the testes and ovaries to synthesize steroids. The protein is Lutropin subunit beta (Lhb) of Rattus norvegicus (Rat).